Reading from the N-terminus, the 193-residue chain is MQRVTSYLPAGTPSSHPTAQVKLPHDLRHLRRKLLHLENGEMVMLDLKDPVLFANGDLLVRDDGELIEILAADEKLFEIRGRDRTHLVELAWHLGNRHLAAQIEEDRIVILRDHVIRSMLQGLGATVLDIDEPFQPARGAYHSHGAHSHDQGHAAHDHGNEHKHDHGHDHVHGPGCDHDHDHDHGHHHDHKHD.

Positions arginine 138–aspartate 193 are disordered. Residues histidine 147–aspartate 193 show a composition bias toward basic and acidic residues.

The protein belongs to the UreE family.

It localises to the cytoplasm. Functionally, involved in urease metallocenter assembly. Binds nickel. Probably functions as a nickel donor during metallocenter assembly. The chain is Urease accessory protein UreE from Rhizobium leguminosarum bv. trifolii (strain WSM2304).